Here is a 252-residue protein sequence, read N- to C-terminus: Phosphate import ATP-binding protein PstB (252 aa).

Positions 6-247 (ITIEKLNLYY…PKDERTEKYI (242 aa)) constitute an ABC transporter domain. ATP is bound at residue 38–45 (GPSGCGKS).

Belongs to the ABC transporter superfamily. Phosphate importer (TC 3.A.1.7) family. The complex is composed of two ATP-binding proteins (PstB), two transmembrane proteins (PstC and PstA) and a solute-binding protein (PstS).

The protein resides in the cell membrane. The catalysed reaction is phosphate(out) + ATP + H2O = ADP + 2 phosphate(in) + H(+). Functionally, part of the ABC transporter complex PstSACB involved in phosphate import. Responsible for energy coupling to the transport system. In Lactobacillus delbrueckii subsp. bulgaricus (strain ATCC 11842 / DSM 20081 / BCRC 10696 / JCM 1002 / NBRC 13953 / NCIMB 11778 / NCTC 12712 / WDCM 00102 / Lb 14), this protein is Phosphate import ATP-binding protein PstB.